The primary structure comprises 124 residues: Large ribosomal subunit protein eL31 (124 aa).

Position 102 is a phosphotyrosine (Y102).

This sequence belongs to the eukaryotic ribosomal protein eL31 family.

The polypeptide is Large ribosomal subunit protein eL31 (RpL31) (Drosophila melanogaster (Fruit fly)).